A 674-amino-acid polypeptide reads, in one-letter code: Nucleoporin NDC1 (674 aa).

Residues 1–24 (MATAVSRPCAGRSRDILWRVLGWR) are Cytoplasmic-facing. A helical transmembrane segment spans residues 25–45 (IVASIVWSVLFLPICTTVFII). Residues 46-68 (FSRIDLFHPIQWLSDSFSDLYSS) lie on the Perinuclear space side of the membrane. Residues 69-89 (YVIFYFLLLSVVIIIISIFNV) form a helical membrane-spanning segment. At 90–114 (EFYAVVPSIPCSRLALIGKIIHPQQ) the chain is on the cytoplasmic side. A helical transmembrane segment spans residues 115 to 135 (LMHSFIHAAMGMVMAWCAAVI). The Perinuclear space segment spans residues 136–165 (TQGQYSFLVVPCTGTNSFGSPAAQTCLNEY). A helical transmembrane segment spans residues 166–186 (HLFFLLTGAFMGYSYSLLYFV). Topologically, residues 187 to 225 (NNMNYLPFPIIQQYKFLRFRRSLLLLVKHSCVESLFLVR) are cytoplasmic. The chain crosses the membrane as a helical span at residues 226 to 246 (NFCILYYFLGYIPKAWISTAM). Residues 247–272 (NLHIDEQVHRPLDTVSGLLNLSLLYH) are Perinuclear space-facing. A helical membrane pass occupies residues 273-293 (VWLCGVFLLTTWYVSWILFKI). At 294-674 (YATEAHVFPV…RLQQFLEFKE (381 aa)) the chain is on the cytoplasmic side. Positions 394 to 425 (SSSYPVEPKKLNSPEETAFQTPKSSQMPRPSV) are disordered. Ser-406 is subject to Phosphoserine. Residues 407 to 421 (PEETAFQTPKSSQMP) show a composition bias toward polar residues. The residue at position 414 (Thr-414) is a Phosphothreonine. Ser-439 bears the Phosphoserine mark. The residue at position 440 (Thr-440) is a Phosphothreonine. Phosphoserine is present on Ser-445. A Phosphothreonine modification is found at Thr-449. Phosphoserine occurs at positions 471 and 474.

The protein belongs to the NDC1 family. In terms of assembly, interacts with the NUP35/NUP53. Interacts with AAAS, anchoring it to the nuclear envelope.

Its subcellular location is the nucleus. The protein resides in the nuclear pore complex. It localises to the nucleus membrane. In terms of biological role, component of the nuclear pore complex (NPC), which plays a key role in de novo assembly and insertion of NPC in the nuclear envelope. Required for NPC and nuclear envelope assembly, possibly by forming a link between the nuclear envelope membrane and soluble nucleoporins, thereby anchoring the NPC in the membrane. In Homo sapiens (Human), this protein is Nucleoporin NDC1 (NDC1).